The chain runs to 411 residues: LIM domain-binding protein 1 (411 aa).

Disordered stretches follow at residues 284–330 (PPAE…TFAL) and 367–411 (DAAN…QASQ). A compositionally biased stretch (low complexity) spans 302–318 (SGGSTMSSGGGNTNNSN). One can recognise an LIM interaction domain (LID) domain in the interval 336-375 (DVMVVGEPTLMGGEFGDEDERLITRLENTQFDAANGIDDE).

Belongs to the LDB family. As to quaternary structure, forms homodimers and heterodimers. In terms of tissue distribution, first expressed at stages 15-16 in presumptive limb mesoderm. As limb outgrowth proceeds, expressed in the entire limb bud, concentrating in the distal mesoderm throughout limb development. Both hindlimbs and forelimbs exhibit similar expression patterns.

It is found in the nucleus. Functionally, binds to the LIM domain of a wide variety of LIM domain-containing transcription factors. This Gallus gallus (Chicken) protein is LIM domain-binding protein 1.